The primary structure comprises 221 residues: Uracil-DNA glycosylase 1 (221 aa).

The Proton acceptor role is filled by Asp-61.

This sequence belongs to the uracil-DNA glycosylase (UDG) superfamily. UNG family.

The protein resides in the cytoplasm. It catalyses the reaction Hydrolyzes single-stranded DNA or mismatched double-stranded DNA and polynucleotides, releasing free uracil.. Excises uracil residues from the DNA which can arise as a result of misincorporation of dUMP residues by DNA polymerase or due to deamination of cytosine. This is Uracil-DNA glycosylase 1 from Listeria monocytogenes serovar 1/2a (strain ATCC BAA-679 / EGD-e).